The sequence spans 772 residues: Nudix hydrolase 3 (772 aa).

The segment covering 1-14 has biased composition (basic and acidic residues); it reads MAEEHFDVLTKSGE. Positions 1 to 25 are disordered; it reads MAEEHFDVLTKSGEKTGVSKPRGEV. A Nudix hydrolase domain is found at 30–172; that stretch reads DYHRAVHVWI…DPAYVPYDVN (143 aa). Positions 69–90 match the Nudix box motif; the sequence is GHISAGDTSLLSAQRELEEELG. Glutamate 84 and glutamate 88 together coordinate Mg(2+).

Belongs to the Nudix hydrolase family. Requires Mg(2+) as cofactor. Mn(2+) is required as a cofactor. Expressed in roots, stems and, at lower level, leaves.

Probably mediates the hydrolysis of some nucleoside diphosphate derivatives. The chain is Nudix hydrolase 3 (NUDT3) from Arabidopsis thaliana (Mouse-ear cress).